We begin with the raw amino-acid sequence, 558 residues long: Two-component response regulator-like APRR5 (558 aa).

Residues R51–W169 enclose the Response regulatory domain. Residues F180 to V233 form a disordered region. A coiled-coil region spans residues Q240–S260. 2 disordered regions span residues S297 to S319 and K535 to P558. Polar residues predominate over residues A303–S319. Residues R509–Q551 enclose the CCT domain.

This sequence belongs to the ARR-like family. Interacts with ADO1 and ADO2. Interacts with SPY (via N-terminus). Post-translationally, phosphorylation varies throughout the diurnal cycle and enhances ADO1 binding. O-fucosylated by SPY. O-fucosylation promotes APRR5 proteolysis.

It localises to the nucleus. Its function is as follows. Transcriptional repressor of CCA1 and LHY, thereby controlling photoperiodic flowering response. Involved in the positive and negative feedback loops of the circadian clock. With RVE8, forms a negative feedback loop of the circadian clock. Expression of several members of the ARR-like family is controlled by circadian rhythm. Proteolytic substrate of the E3 ubiquitin ligase SCF(ADO1) complex. APRR9, APRR7, and APRR5 coordinately act on the upstream region of the target genes to repress their expression from noon until midnight. The particular coordinated sequential expression of APRR9, APRR7, APRR5, APRR3 and APPR1 result to circadian waves that may be at the basis of the endogenous circadian clock. Negative regulator of shade avoidance response. Involved in the inhibition of leaf expansion in shade avoidance response. In Arabidopsis thaliana (Mouse-ear cress), this protein is Two-component response regulator-like APRR5 (APRR5).